Consider the following 846-residue polypeptide: DNA mismatch repair protein MutS (846 aa).

ATP is bound at residue 610-617; sequence GPNMGGKS.

Belongs to the DNA mismatch repair MutS family.

Functionally, this protein is involved in the repair of mismatches in DNA. It is possible that it carries out the mismatch recognition step. This protein has a weak ATPase activity. The polypeptide is DNA mismatch repair protein MutS (Legionella pneumophila (strain Lens)).